The chain runs to 301 residues: tRNA U34 carboxymethyltransferase (301 aa).

Residues K70, W84, K89, G108, D130 to S132, V157 to E158, Y177, and R292 contribute to the carboxy-S-adenosyl-L-methionine site.

This sequence belongs to the class I-like SAM-binding methyltransferase superfamily. CmoB family. As to quaternary structure, homotetramer.

It carries out the reaction carboxy-S-adenosyl-L-methionine + 5-hydroxyuridine(34) in tRNA = 5-carboxymethoxyuridine(34) in tRNA + S-adenosyl-L-homocysteine + H(+). Catalyzes carboxymethyl transfer from carboxy-S-adenosyl-L-methionine (Cx-SAM) to 5-hydroxyuridine (ho5U) to form 5-carboxymethoxyuridine (cmo5U) at position 34 in tRNAs. The sequence is that of tRNA U34 carboxymethyltransferase from Sulfurovum sp. (strain NBC37-1).